The primary structure comprises 541 residues: Cytosolic phospholipase A2 gamma (541 aa).

Positions 1 to 541 (MGSSEVSIIP…KDSARSCCLA (541 aa)) constitute a PLA2c domain. Residue Ser-82 is the Nucleophile of the active site. Residues 260–292 (LTLKGLWRRAVANAKSIGHLIFARLLRLQESSQ) form a required for lipid droplet localization region. Ser-337 is modified (phosphoserine). Asp-385 acts as the Proton acceptor in catalysis. Cys-538 is modified (cysteine methyl ester). Cys-538 carries S-farnesyl cysteine lipidation. Positions 539-541 (CLA) are cleaved as a propeptide — removed in mature form.

(Microbial infection) Interacts with HCV non-structural protein 4B/NS4B; this interaction likely initiates the recruitment of replication complexes to lipid droplets. As to expression, highly expressed in heart and skeletal muscle.

The protein localises to the cell membrane. It is found in the endoplasmic reticulum membrane. The protein resides in the mitochondrion membrane. It localises to the lipid droplet. It carries out the reaction a 1,2-diacyl-sn-glycero-3-phosphocholine + H2O = a 1-acyl-sn-glycero-3-phosphocholine + a fatty acid + H(+). The catalysed reaction is a 1-O-alkyl-2-acyl-sn-glycero-3-phosphocholine + H2O = a 1-O-alkyl-sn-glycero-3-phosphocholine + a fatty acid + H(+). It catalyses the reaction 1,2-dihexadecanoyl-sn-glycero-3-phosphocholine + H2O = 1-hexadecanoyl-sn-glycero-3-phosphocholine + hexadecanoate + H(+). The enzyme catalyses 1-hexadecanoyl-2-(9Z-octadecenoyl)-sn-glycero-3-phosphocholine + H2O = 1-hexadecanoyl-sn-glycero-3-phosphocholine + (9Z)-octadecenoate + H(+). It carries out the reaction 1-hexadecanoyl-2-(9Z,12Z-octadecadienoyl)-sn-glycero-3-phosphocholine + H2O = (9Z,12Z)-octadecadienoate + 1-hexadecanoyl-sn-glycero-3-phosphocholine + H(+). The catalysed reaction is 1-hexadecanoyl-2-(5Z,8Z,11Z,14Z-eicosatetraenoyl)-sn-glycero-3-phosphocholine + H2O = 1-hexadecanoyl-sn-glycero-3-phosphocholine + (5Z,8Z,11Z,14Z)-eicosatetraenoate + H(+). It catalyses the reaction 1-O-hexadecyl-2-(5Z,8Z,11Z,14Z)-eicosatetraenoyl-sn-glycero-3-phosphocholine + H2O = 1-O-hexadecyl-sn-glycero-3-phosphocholine + (5Z,8Z,11Z,14Z)-eicosatetraenoate + H(+). The enzyme catalyses 1-hexadecanoyl-2-(5Z,8Z,11Z,14Z-eicosatetraenoyl)-sn-glycero-3-phosphocholine + H2O = 2-(5Z,8Z,11Z,14Z)-eicosatetraenoyl-sn-glycero-3-phosphocholine + hexadecanoate + H(+). It carries out the reaction a 1-acyl-sn-glycero-3-phosphocholine + H2O = sn-glycerol 3-phosphocholine + a fatty acid + H(+). The catalysed reaction is 1-hexadecanoyl-sn-glycero-3-phosphocholine + H2O = sn-glycerol 3-phosphocholine + hexadecanoate + H(+). It catalyses the reaction 2 1-hexadecanoyl-sn-glycero-3-phosphocholine = 1,2-dihexadecanoyl-sn-glycero-3-phosphocholine + sn-glycerol 3-phosphocholine. The enzyme catalyses 1-hexadecanoyl-sn-glycero-3-phosphoethanolamine + 1-hexadecanoyl-sn-glycero-3-phosphocholine = 1,2-dihexadecanoyl-sn-glycero-3-phosphoethanolamine + sn-glycerol 3-phosphocholine. It carries out the reaction 1-hexadecanoyl-sn-glycero-3-phosphoethanolamine + 1-hexadecanoyl-sn-glycero-3-phosphocholine = sn-glycero-3-phosphoethanolamine + 1,2-dihexadecanoyl-sn-glycero-3-phosphocholine. The catalysed reaction is 2 1-hexadecanoyl-sn-glycero-3-phosphoethanolamine = 1,2-dihexadecanoyl-sn-glycero-3-phosphoethanolamine + sn-glycero-3-phosphoethanolamine. It catalyses the reaction 1-O-hexadecyl-sn-glycero-3-phosphocholine + 1-hexadecanoyl-sn-glycero-3-phosphocholine = 1-O-hexadecyl-2-hexadecanoyl-sn-glycero-3-phosphocholine + sn-glycerol 3-phosphocholine. The enzyme catalyses a 1-O-(1Z-alkenyl)-sn-glycero-3-phosphoethanolamine + 1-hexadecanoyl-sn-glycero-3-phosphocholine = 1-O-(1Z)-alkenyl-2-hexadecanoyl-sn-glycero-3-phosphoethanolamine + sn-glycerol 3-phosphocholine. It carries out the reaction 1-O-hexadecyl-sn-glycero-3-phosphocholine + 1-hexadecanoyl-sn-glycero-3-phosphoethanolamine = 1-O-hexadecyl-2-hexadecanoyl-sn-glycero-3-phosphocholine + sn-glycero-3-phosphoethanolamine. The catalysed reaction is 1-octadecanoyl-2-(5Z,8Z,11Z,14Z)-eicosatetraenoyl-sn-glycero-3-phosphoethanolamine + 1-hexadecanoyl-sn-glycero-3-phosphocholine = 1-octadecanoyl-sn-glycero-3-phosphoethanolamine + 1-hexadecanoyl-2-(5Z,8Z,11Z,14Z-eicosatetraenoyl)-sn-glycero-3-phosphocholine. It catalyses the reaction 1-octadecanoyl-2-(5Z,8Z,11Z,14Z)-eicosatetraenoyl-sn-glycero-3-phosphoethanolamine + 1-O-hexadecyl-sn-glycero-3-phosphocholine = 1-octadecanoyl-sn-glycero-3-phosphoethanolamine + 1-O-hexadecyl-2-(5Z,8Z,11Z,14Z)-eicosatetraenoyl-sn-glycero-3-phosphocholine. The enzyme catalyses 1-hexadecanoyl-2-(9Z,12Z-octadecadienoyl)-sn-glycero-3-phosphocholine + a 1-O-(1Z-alkenyl)-sn-glycero-3-phosphoethanolamine = 1-O-(1Z-alkenyl)-2-(9Z,12Z-octadecadienoyl)-sn-glycero-3-phosphoethanolamine + 1-hexadecanoyl-sn-glycero-3-phosphocholine. It carries out the reaction 1-hexadecanoyl-2-(5Z,8Z,11Z,14Z-eicosatetraenoyl)-sn-glycero-3-phosphocholine + a 1-O-(1Z-alkenyl)-sn-glycero-3-phosphoethanolamine = 1-O-(1Z)-alkenyl-2-(5Z,8Z,11Z,14Z)-eicosatetraenoyl-sn-glycero-3-phosphoethanolamine + 1-hexadecanoyl-sn-glycero-3-phosphocholine. Its activity is regulated as follows. Not regulated by calcium, coenzyme A or ATP. Lysophospholipase activity is inhibited by palmitoyl-CoA. Lysophospholipase and O-acyltransferase activities are inhibited by methylarachidonoylfluorophosphonate. Lysophospholipase activity is inhibited by phosphatidate or lysophosphatidate. O-acyltransferase activity is up-regulated at low concentration (10-20 uM) of phosphatidate or lysophosphatidate, but inhibited at higher concentrations. Functionally, calcium-independent phospholipase, lysophospholipase and O-acyltransferase involved in phospholipid remodeling with implications in endoplasmic reticulum membrane homeostasis and lipid droplet biogenesis. Preferentially hydrolyzes the ester bond of the fatty acyl group attached at the sn-2 position of phospholipids with choline and ethanolamine head groups, producing lysophospholipids that are used in deacylation-reacylation cycles. Transfers the sn-1 fatty acyl from one lysophospholipid molecule to the sn-2 position of another lysophospholipid to form diacyl, alkylacyl and alkenylacyl glycerophospholipids. Cleaves ester bonds but not alkyl or alkenyl ether bonds at sn-1 position of lysophospholipids. Catalyzes sn-2 fatty acyl transfer from phospholipids to the sn-2 position of 1-O-alkyl or 1-O-alkenyl lysophospholipids with lower efficiency. In response to dietary fatty acids, may play a role in the formation of nascent lipid droplets from the endoplasmic reticulum likely by regulating the phospholipid composition of these organelles. (Microbial infection) May play a role in replication and assembly of human hepatitis C virus (HCV). In response to HCV infection, promotes remodeling of host endoplasmic reticulum membranes to form organelle-like structures called membranous web, where HCV replication occur. Can further mediate translocation of replication complexes to lipid droplets to enable virion assembly. In terms of biological role, (Microbial infection) May facilitate human T-lymphotropic virus type 1 (HTLV-1) infection by promoting leukotriene B4 (LTB4) biosynthesis. LTB4 acts as a chemoattractant for HTLV-1-infected CD4-positive T cells and favors cell to cell viral transmission. This chain is Cytosolic phospholipase A2 gamma (PLA2G4C), found in Homo sapiens (Human).